The sequence spans 231 residues: 6-phosphogluconolactonase (231 aa).

This sequence belongs to the glucosamine/galactosamine-6-phosphate isomerase family. 6-phosphogluconolactonase subfamily.

It carries out the reaction 6-phospho-D-glucono-1,5-lactone + H2O = 6-phospho-D-gluconate + H(+). The protein operates within carbohydrate degradation; pentose phosphate pathway; D-ribulose 5-phosphate from D-glucose 6-phosphate (oxidative stage): step 2/3. Its function is as follows. Hydrolysis of 6-phosphogluconolactone to 6-phosphogluconate. This Neisseria meningitidis serogroup A / serotype 4A (strain DSM 15465 / Z2491) protein is 6-phosphogluconolactonase (pgl).